The chain runs to 761 residues: Cyclin-F (761 aa).

Positions 19–27 match the Nuclear localization signal 1 motif; the sequence is RRRIKRRPR. The F-box domain occupies 28–75; that stretch reads VLTLLSLPEDVLLYVLECLPAVDILSMREVHPHLRSLVDSHSSVWARA. Residues 300–411 enclose the Cyclin N-terminal domain; sequence NKSSIFTTQK…EIISALEGKI (112 aa). 2 consecutive short sequence motifs (d box) follow at residues 316 to 319 and 355 to 358; these read RYIL and RAKL. Disordered regions lie at residues 575–594 and 677–761; these read NKTK…SFVT and AENG…SDEL. The segment covering 580-590 has biased composition (basic and acidic residues); sequence RREESIQEDRG. The PEST stretch occupies residues 589–745; that stretch reads RGSFVTTPTA…LLKASRRQVK (157 aa). Low complexity predominate over residues 691 to 718; it reads SSGYSSVSSGGSPTSSSSPGLPFTPTPG. The segment covering 739 to 749 has biased composition (basic residues); that stretch reads ASRRQVKRKNQ.

It belongs to the cyclin family. Cyclin AB subfamily. Component of the SCF(CCNF) complex.

Its subcellular location is the nucleus. The protein resides in the cytoplasm. It is found in the perinuclear region. The protein localises to the cytoskeleton. It localises to the microtubule organizing center. Its subcellular location is the centrosome. The protein resides in the centriole. Substrate recognition component of the SCF(CCNF) E3 ubiquitin-protein ligase complex which mediates the ubiquitination and subsequent proteasomal degradation of target proteins. The SCF(CCNF) E3 ubiquitin-protein ligase complex is an integral component of the ubiquitin proteasome system (UPS) and links proteasome degradation to the cell cycle. Mediates the substrate recognition and the proteasomal degradation of various target proteins during G2 phase involved in the regulation of cell cycle progression and in the maintenance of genome stability. The protein is Cyclin-F (ccnf) of Xenopus laevis (African clawed frog).